The following is a 149-amino-acid chain: Arginine repressor (149 aa).

The protein belongs to the ArgR family.

The protein localises to the cytoplasm. It participates in amino-acid biosynthesis; L-arginine biosynthesis [regulation]. Regulates arginine biosynthesis genes. The polypeptide is Arginine repressor (Halalkalibacterium halodurans (strain ATCC BAA-125 / DSM 18197 / FERM 7344 / JCM 9153 / C-125) (Bacillus halodurans)).